Consider the following 275-residue polypeptide: Exosome complex component Rrp42 (275 aa).

It belongs to the RNase PH family. Rrp42 subfamily. As to quaternary structure, component of the archaeal exosome complex. Forms a hexameric ring-like arrangement composed of 3 Rrp41-Rrp42 heterodimers. The hexameric ring associates with a trimer of Rrp4 and/or Csl4 subunits.

The protein resides in the cytoplasm. Non-catalytic component of the exosome, which is a complex involved in RNA degradation. Contributes to the structuring of the Rrp41 active site. The protein is Exosome complex component Rrp42 of Saccharolobus solfataricus (strain ATCC 35092 / DSM 1617 / JCM 11322 / P2) (Sulfolobus solfataricus).